The chain runs to 70 residues: MNDLKSLKSELTSKTVEELFKHLNLLKKELFNLRFQQTLGELKNTSRFSLVKKSIARIKTELTKRSSSGE.

Belongs to the universal ribosomal protein uL29 family.

The chain is Large ribosomal subunit protein uL29 from Rickettsia bellii (strain OSU 85-389).